The chain runs to 273 residues: Ribosomal RNA small subunit methyltransferase A (273 aa).

Residues Asn-18, Leu-20, Gly-45, Glu-66, Asp-91, and Asn-113 each coordinate S-adenosyl-L-methionine.

It belongs to the class I-like SAM-binding methyltransferase superfamily. rRNA adenine N(6)-methyltransferase family. RsmA subfamily.

The protein localises to the cytoplasm. The enzyme catalyses adenosine(1518)/adenosine(1519) in 16S rRNA + 4 S-adenosyl-L-methionine = N(6)-dimethyladenosine(1518)/N(6)-dimethyladenosine(1519) in 16S rRNA + 4 S-adenosyl-L-homocysteine + 4 H(+). In terms of biological role, specifically dimethylates two adjacent adenosines (A1518 and A1519) in the loop of a conserved hairpin near the 3'-end of 16S rRNA in the 30S particle. May play a critical role in biogenesis of 30S subunits. This Klebsiella pneumoniae subsp. pneumoniae (strain ATCC 700721 / MGH 78578) protein is Ribosomal RNA small subunit methyltransferase A.